The primary structure comprises 431 residues: Protein S-Myc (431 aa).

A Phosphotyrosine; by Tyr-kinases modification is found at tyrosine 36. The region spanning 348 to 400 (ERRRNHNRMERQRRDIMRSSFLNLRDLVPELVHNEKAAKVVILKKATEYIHTL) is the bHLH domain. Residues 400 to 421 (LQADESKLLVERKKLYERQQQL) are leucine-zipper.

In terms of assembly, efficient DNA binding requires dimerization with another bHLH protein.

Its subcellular location is the nucleus. Has apoptosis-inducing activity. This chain is Protein S-Myc (Mycs), found in Mus musculus (Mouse).